A 126-amino-acid polypeptide reads, in one-letter code: MYYPLLSIALGSVLGAWLRWFLGLKLNPIYPQIPLGTVTVNLVGGFIIGFAMAYFAHSDLNPNYKLFVITGFCGALTTFSTFSIEIVTLLQSGKWGMAMLAISIHLIGSLIFTCLGLATYYWVAGH.

The next 4 helical transmembrane spans lie at 4–24 (PLLS…FLGL), 33–53 (IPLG…FAMA), 67–87 (FVIT…IEIV), and 97–117 (MAML…CLGL). Na(+)-binding residues include Gly74 and Thr77.

It belongs to the fluoride channel Fluc/FEX (TC 1.A.43) family.

It localises to the cell inner membrane. The enzyme catalyses fluoride(in) = fluoride(out). With respect to regulation, na(+) is not transported, but it plays an essential structural role and its presence is essential for fluoride channel function. Fluoride-specific ion channel. Important for reducing fluoride concentration in the cell, thus reducing its toxicity. The polypeptide is Fluoride-specific ion channel FluC (Acinetobacter baumannii (strain AB307-0294)).